Consider the following 80-residue polypeptide: Small ribosomal subunit protein bS18 (80 aa).

This sequence belongs to the bacterial ribosomal protein bS18 family. Part of the 30S ribosomal subunit. Forms a tight heterodimer with protein bS6.

Its function is as follows. Binds as a heterodimer with protein bS6 to the central domain of the 16S rRNA, where it helps stabilize the platform of the 30S subunit. This Staphylococcus haemolyticus (strain JCSC1435) protein is Small ribosomal subunit protein bS18.